Consider the following 448-residue polypeptide: Asparagine--tRNA ligase (448 aa).

It belongs to the class-II aminoacyl-tRNA synthetase family. In terms of assembly, homodimer.

It localises to the cytoplasm. It catalyses the reaction tRNA(Asn) + L-asparagine + ATP = L-asparaginyl-tRNA(Asn) + AMP + diphosphate + H(+). This chain is Asparagine--tRNA ligase, found in Streptococcus pyogenes serotype M4 (strain MGAS10750).